Reading from the N-terminus, the 195-residue chain is ATP-dependent Clp protease proteolytic subunit (195 aa).

Catalysis depends on Ser99, which acts as the Nucleophile. The active site involves His124.

Belongs to the peptidase S14 family. As to quaternary structure, fourteen ClpP subunits assemble into 2 heptameric rings which stack back to back to give a disk-like structure with a central cavity, resembling the structure of eukaryotic proteasomes.

The protein localises to the cytoplasm. It catalyses the reaction Hydrolysis of proteins to small peptides in the presence of ATP and magnesium. alpha-casein is the usual test substrate. In the absence of ATP, only oligopeptides shorter than five residues are hydrolyzed (such as succinyl-Leu-Tyr-|-NHMec, and Leu-Tyr-Leu-|-Tyr-Trp, in which cleavage of the -Tyr-|-Leu- and -Tyr-|-Trp bonds also occurs).. Cleaves peptides in various proteins in a process that requires ATP hydrolysis. Has a chymotrypsin-like activity. Plays a major role in the degradation of misfolded proteins. This Caldicellulosiruptor saccharolyticus (strain ATCC 43494 / DSM 8903 / Tp8T 6331) protein is ATP-dependent Clp protease proteolytic subunit.